Reading from the N-terminus, the 273-residue chain is Putative phosphoenolpyruvate synthase regulatory protein (273 aa).

ADP is bound at residue 153–160 (GVSRSGKT).

The protein belongs to the pyruvate, phosphate/water dikinase regulatory protein family. PSRP subfamily.

It carries out the reaction [pyruvate, water dikinase] + ADP = [pyruvate, water dikinase]-phosphate + AMP + H(+). The catalysed reaction is [pyruvate, water dikinase]-phosphate + phosphate + H(+) = [pyruvate, water dikinase] + diphosphate. In terms of biological role, bifunctional serine/threonine kinase and phosphorylase involved in the regulation of the phosphoenolpyruvate synthase (PEPS) by catalyzing its phosphorylation/dephosphorylation. This is Putative phosphoenolpyruvate synthase regulatory protein from Verminephrobacter eiseniae (strain EF01-2).